A 434-amino-acid chain; its full sequence is Forkhead box protein A2-A (434 aa).

A DNA-binding region (fork-head) is located at residues 149-243 (KPPYSYISLI…ENGCYLRRQK (95 aa)). Basic and acidic residues predominate over residues 249 to 262 (KKPSLREGGGKKLS). Disordered stretches follow at residues 249-339 (KKPS…QSHL) and 408-434 (SGLE…MNSS). 2 stretches are compositionally biased toward low complexity: residues 263 to 291 (EGAS…SSSP) and 317 to 333 (ASQA…VLSH). Over residues 408–422 (SGLESSPITSDTSYY) the composition is skewed to polar residues.

At gastrula stage, expressed in both the anterior and posterior endoderm, with endodermal expression persisting into early tailbud stages. Expression is absent in gastrula stage ectoderm. During tailbud stages, expressed in the pharyngeal region, the neural floor plate, the midbrain, hindbrain and in cranial neural crest cells. Expressed in the foregut of hatching larvae. In tadpoles, expressed in the pharyngeal pouches and in other anterior endodermal regions. Within the tadpole nervous system, expressed in the neural floor plate, at high levels in the ventral midbrain and hindbrain, and at lower levels in the spinal cord. Expressed in the adult lung and brain.

The protein localises to the nucleus. In terms of biological role, acts as a transcriptional activator during early development, limiting the extent of mesoderm formation in the gastrula. Binds to DNA via the target sequence 5'-GT[AC]AACA-3', with 5'-GTAAACA-3' being the preferred binding site. The chain is Forkhead box protein A2-A (foxa2-a) from Xenopus laevis (African clawed frog).